Here is a 316-residue protein sequence, read N- to C-terminus: N-acetyl-gamma-glutamyl-phosphate reductase (316 aa).

C136 is an active-site residue.

The protein belongs to the NAGSA dehydrogenase family. Type 1 subfamily.

It localises to the cytoplasm. It catalyses the reaction N-acetyl-L-glutamate 5-semialdehyde + phosphate + NADP(+) = N-acetyl-L-glutamyl 5-phosphate + NADPH + H(+). It functions in the pathway amino-acid biosynthesis; L-arginine biosynthesis; N(2)-acetyl-L-ornithine from L-glutamate: step 3/4. Its function is as follows. Catalyzes the NADPH-dependent reduction of N-acetyl-5-glutamyl phosphate to yield N-acetyl-L-glutamate 5-semialdehyde. This Xanthomonas campestris pv. campestris (strain B100) protein is N-acetyl-gamma-glutamyl-phosphate reductase.